The primary structure comprises 256 residues: Cytokine-inducible SH2-containing protein (256 aa).

The region spanning 81 to 162 is the SH2 domain; it reads WYWGSITASE…PDVVSLVQHY (82 aa). Residues 168–190 are disordered; the sequence is ADTRSDSPDPAPTPALPVSKPDA. An SOCS box domain is found at 207–255; the sequence is KLVQPFVRRSSARSLQHLCRLVINRLVTDVDCLPLPRRMADYLRQYPFQ.

Stably associated with the tyrosine-phosphorylated IL3 receptor beta chain and tyrosine-phosphorylated EPO receptor (EPOR).

It participates in protein modification; protein ubiquitination. Functionally, SOCS family proteins form part of a classical negative feedback system that regulates cytokine signal transduction. CIS is involved in the negative regulation of cytokines that signal through the JAK-STAT5 pathway such as erythropoietin, prolactin and interleukin 3 (IL3) receptor. Inhibits STAT5 trans-activation by suppressing its tyrosine phosphorylation. May be a substrate recognition component of a SCF-like ECS (Elongin BC-CUL2/5-SOCS-box protein) E3 ubiquitin-protein ligase complex which mediates the ubiquitination and subsequent proteasomal degradation of target proteins. The chain is Cytokine-inducible SH2-containing protein (Cish) from Rattus norvegicus (Rat).